An 864-amino-acid chain; its full sequence is Translation initiation factor IF-2 (864 aa).

Residues 140–171 (DSRSLNTKKENKLKISNKDEQNKKFNQHRESN) show a composition bias toward basic and acidic residues. Residues 140–179 (DSRSLNTKKENKLKISNKDEQNKKFNQHRESNSFDLNHKK) form a disordered region. The region spanning 364–533 (IRAPVVTIMG…LLQAEMLELK (170 aa)) is the tr-type G domain. Positions 373-380 (GHVDHGKT) are G1. GTP is bound at residue 373 to 380 (GHVDHGKT). The G2 stretch occupies residues 398-402 (GITQN). The tract at residues 419–422 (DTPG) is G3. GTP-binding positions include 419 to 423 (DTPGH) and 473 to 476 (NKID). The interval 473–476 (NKID) is G4. A G5 region spans residues 509 to 511 (SAK).

This sequence belongs to the TRAFAC class translation factor GTPase superfamily. Classic translation factor GTPase family. IF-2 subfamily.

It is found in the cytoplasm. Its function is as follows. One of the essential components for the initiation of protein synthesis. Protects formylmethionyl-tRNA from spontaneous hydrolysis and promotes its binding to the 30S ribosomal subunits. Also involved in the hydrolysis of GTP during the formation of the 70S ribosomal complex. The polypeptide is Translation initiation factor IF-2 (Buchnera aphidicola subsp. Acyrthosiphon pisum (strain 5A)).